A 403-amino-acid polypeptide reads, in one-letter code: Casein kinase I isoform delta-A (403 aa).

Positions 9 to 277 (YRLGRKIGSG…YLRQLFRNLF (269 aa)) constitute a Protein kinase domain. ATP is bound by residues 15-23 (IGSGSFGDI) and lysine 38. The Proton acceptor role is filled by aspartate 128. Positions 315 to 340 (QGRIPLPRVMLPTSSGRPRGTQEVAP) are autoinhibitory. The disordered stretch occupies residues 322–403 (RVMLPTSSGR…PSGLQSAVPR (82 aa)).

The protein belongs to the protein kinase superfamily. Monomer. Interacts with per1 and per2. Component of the circadian core oscillator. In terms of processing, autophosphorylated on serine and threonine residues.

The protein localises to the cytoplasm. It localises to the nucleus. The catalysed reaction is L-seryl-[protein] + ATP = O-phospho-L-seryl-[protein] + ADP + H(+). It carries out the reaction L-threonyl-[protein] + ATP = O-phospho-L-threonyl-[protein] + ADP + H(+). Exhibits substrate-dependent heparin activation. Casein kinases are operationally defined by their preferential utilization of acidic proteins such as caseins as substrates. Central component of the circadian clock. May act as a negative regulator of circadian rhythmicity by phosphorylating per1 and per2, which may lead to their degradation. Participates in wnt signaling. This Danio rerio (Zebrafish) protein is Casein kinase I isoform delta-A (csnk1da).